Here is a 642-residue protein sequence, read N- to C-terminus: Threonine--tRNA ligase (642 aa).

The TGS domain maps to 1-61 (MPVITLPDGS…ENDAQLSIIT (61 aa)). Positions 243 to 534 (DHRKIGKQLD…LTEEFAGFFP (292 aa)) are catalytic. The residue at position 286 (lysine 286) is an N6-acetyllysine. Positions 334, 385, and 511 each coordinate Zn(2+).

Belongs to the class-II aminoacyl-tRNA synthetase family. Homodimer. Zn(2+) serves as cofactor.

The protein resides in the cytoplasm. The enzyme catalyses tRNA(Thr) + L-threonine + ATP = L-threonyl-tRNA(Thr) + AMP + diphosphate + H(+). Catalyzes the attachment of threonine to tRNA(Thr) in a two-step reaction: L-threonine is first activated by ATP to form Thr-AMP and then transferred to the acceptor end of tRNA(Thr). Also edits incorrectly charged L-seryl-tRNA(Thr). This Escherichia coli O9:H4 (strain HS) protein is Threonine--tRNA ligase.